A 352-amino-acid chain; its full sequence is MATQMVKGNTAVIIGAMYAGCDCYFGYPITPASEILHEASRYFPMVGRKFVQAESEEAAINMVYGAAAAGHRVMTASSGPGISLKQEGISFLAGAELPAVIVDVMRAGPGLGNIGPEQGDYNQIVKGGGHGNYRNMVLAPSSVQEMCDLTMEAFELADKYRNPVVVLTDAVLGQMAEPLRFPEEAVEHRPDTSWAVCGNRETMKNLVTSIFLDFDELEEFNFYLQEKYARIEENEVRYEEYLVDDAEIVMVAYGISSRVARSAVETARAEGINVGLLRPITLFPFPSDRIRELADGGCRFISVEMSSGQMREDIRMASGCRDVELVNRMGGNLIELRDVLEKIREVAGDSSD.

Heterotrimer of the VorA, VorB and VorC subunits.

The enzyme catalyses 3-methyl-2-oxobutanoate + 2 oxidized [2Fe-2S]-[ferredoxin] + CoA = 2-methylpropanoyl-CoA + 2 reduced [2Fe-2S]-[ferredoxin] + CO2 + H(+). In Methanothermobacter thermautotrophicus (strain ATCC 29096 / DSM 1053 / JCM 10044 / NBRC 100330 / Delta H) (Methanobacterium thermoautotrophicum), this protein is Ketoisovalerate oxidoreductase subunit VorB (vorB).